Here is a 91-residue protein sequence, read N- to C-terminus: Large ribosomal subunit protein uL23c (91 aa).

The protein belongs to the universal ribosomal protein uL23 family. Part of the 50S ribosomal subunit.

It is found in the plastid. The protein resides in the chloroplast. Its function is as follows. Binds to 23S rRNA. This Pinus thunbergii (Japanese black pine) protein is Large ribosomal subunit protein uL23c (rpl23).